The chain runs to 399 residues: Acetate kinase (399 aa).

A Mg(2+)-binding site is contributed by asparagine 7. Lysine 14 is an ATP binding site. Residue arginine 91 participates in substrate binding. The active-site Proton donor/acceptor is the aspartate 148. ATP-binding positions include 208–212 (HLGNG), 283–285 (DFR), and 331–335 (GIGEN). Glutamate 384 serves as a coordination point for Mg(2+).

It belongs to the acetokinase family. In terms of assembly, homodimer. Requires Mg(2+) as cofactor. Mn(2+) is required as a cofactor.

It localises to the cytoplasm. It carries out the reaction acetate + ATP = acetyl phosphate + ADP. It functions in the pathway metabolic intermediate biosynthesis; acetyl-CoA biosynthesis; acetyl-CoA from acetate: step 1/2. Catalyzes the formation of acetyl phosphate from acetate and ATP. Can also catalyze the reverse reaction. The chain is Acetate kinase from Acetivibrio thermocellus (strain ATCC 27405 / DSM 1237 / JCM 9322 / NBRC 103400 / NCIMB 10682 / NRRL B-4536 / VPI 7372) (Clostridium thermocellum).